The sequence spans 377 residues: MKILVDENMPYAEMLFSQLGEVILKPGRSLTADDLVDIDALMIRSVTKVNAALISKASKLKFVGTATAGMDHVDQALLKEKGIYFTAAPGCNKVGVAEYVFSVMMVLAQQQGFSVFEQTVGIVGAGQVGSYLQQCLQGIGIKVLINDPFKQEEGDEREFTSLDRLLQEADVITLHTPITRDGKYPTHHLINKEILNSLRADQILINAARGPVVDNQALKHRLQQADGFTAALDVFEFEPEVDMELLPLLAFATPHVAGYGLEGKARGTTMIFNSYCEFIGNELRAHASDLLPTAPVPKVVLDRKWDEATLHTLTQMVYDVRRDDAQFRREIGAPGAFDLMRKEYWDRREYSAVTLVGSAQCRLKPLAKLGFQVEVSQ.

Residues S45 and T67 each contribute to the substrate site. Residues 127–128 (QV), D147, and T176 each bind NAD(+). R209 is an active-site residue. Residue D233 coordinates NAD(+). E238 is an active-site residue. H255 acts as the Proton donor in catalysis. NAD(+) is bound at residue G258. Residue Y259 participates in substrate binding.

It belongs to the D-isomer specific 2-hydroxyacid dehydrogenase family. PdxB subfamily. As to quaternary structure, homodimer.

It is found in the cytoplasm. The enzyme catalyses 4-phospho-D-erythronate + NAD(+) = (R)-3-hydroxy-2-oxo-4-phosphooxybutanoate + NADH + H(+). Its pathway is cofactor biosynthesis; pyridoxine 5'-phosphate biosynthesis; pyridoxine 5'-phosphate from D-erythrose 4-phosphate: step 2/5. Catalyzes the oxidation of erythronate-4-phosphate to 3-hydroxy-2-oxo-4-phosphonooxybutanoate. This Vibrio vulnificus (strain YJ016) protein is Erythronate-4-phosphate dehydrogenase.